The chain runs to 346 residues: DnaJ protein ERDJ3B (346 aa).

The first 23 residues, 1 to 23 (MAIRWSELCIVLFALSYAICVLA), serve as a signal peptide directing secretion. A J domain is found at 26–91 (SYYDVLQVPK…EKREIYNKYG (66 aa)). N-linked (GlcNAc...) asparagine glycosylation is present at Asn267.

As to quaternary structure, interacts with SDF2 and MED37A/BIP1. N-glycosylated. In terms of tissue distribution, expressed in leaves, flower buds and flowers.

Its subcellular location is the endoplasmic reticulum lumen. Its function is as follows. Regulates protein folding in the endoplasmic reticulum (ER) lumen. Forms a complex in the ER with SDF2 and MED37A/BIP1 which is required for the proper accumulation and function of the surface-exposed leucine-rich repeat receptor kinases EFR involved in pathogen-associated molecular pattern (PAMP) triggered immunity. The protein is DnaJ protein ERDJ3B (ERDJ3B) of Arabidopsis thaliana (Mouse-ear cress).